Reading from the N-terminus, the 238-residue chain is Ribonuclease PH (238 aa).

Residues Arg86 and Gly124 to Arg126 contribute to the phosphate site.

It belongs to the RNase PH family. In terms of assembly, homohexameric ring arranged as a trimer of dimers.

It carries out the reaction tRNA(n+1) + phosphate = tRNA(n) + a ribonucleoside 5'-diphosphate. Its function is as follows. Phosphorolytic 3'-5' exoribonuclease that plays an important role in tRNA 3'-end maturation. Removes nucleotide residues following the 3'-CCA terminus of tRNAs; can also add nucleotides to the ends of RNA molecules by using nucleoside diphosphates as substrates, but this may not be physiologically important. Probably plays a role in initiation of 16S rRNA degradation (leading to ribosome degradation) during starvation. This chain is Ribonuclease PH, found in Brucella abortus (strain S19).